Reading from the N-terminus, the 252-residue chain is Ribonuclease HII (252 aa).

In terms of domain architecture, RNase H type-2 spans 41–232 (LLVAGVDEAG…VRLALEGREQ (192 aa)). A divalent metal cation is bound by residues D47, E48, and D140.

Belongs to the RNase HII family. Mn(2+) is required as a cofactor. Requires Mg(2+) as cofactor.

Its subcellular location is the cytoplasm. It carries out the reaction Endonucleolytic cleavage to 5'-phosphomonoester.. Functionally, endonuclease that specifically degrades the RNA of RNA-DNA hybrids. The protein is Ribonuclease HII of Xanthomonas oryzae pv. oryzae (strain KACC10331 / KXO85).